The primary structure comprises 421 residues: 3-isopropylmalate dehydratase large subunit (421 aa).

[4Fe-4S] cluster is bound by residues Cys-300, Cys-360, and Cys-363.

This sequence belongs to the aconitase/IPM isomerase family. LeuC type 2 subfamily. As to quaternary structure, heterodimer of LeuC and LeuD. [4Fe-4S] cluster serves as cofactor.

The enzyme catalyses (2R,3S)-3-isopropylmalate = (2S)-2-isopropylmalate. The protein operates within amino-acid biosynthesis; L-leucine biosynthesis; L-leucine from 3-methyl-2-oxobutanoate: step 2/4. Functionally, catalyzes the isomerization between 2-isopropylmalate and 3-isopropylmalate, via the formation of 2-isopropylmaleate. This Moorella thermoacetica (strain ATCC 39073 / JCM 9320) protein is 3-isopropylmalate dehydratase large subunit.